The primary structure comprises 1293 residues: Late blight resistance protein R1-A (1293 aa).

Coiled coils occupy residues 423–446 (RYSD…ESLQ) and 538–560 (PRMN…KLLN). The 288-residue stretch at 539-826 (RMNEEIVGFE…SEAFIKSSEG (288 aa)) folds into the NB-ARC domain. 572–579 (GMPGLGKT) contributes to the ATP binding site. LRR repeat units follow at residues 876 to 899 (AEEN…VYSH), 956 to 981 (FKFL…VYLK), 1027 to 1049 (MVKL…LLEN), 1056 to 1079 (LETL…KTPN), 1102 to 1125 (PIRL…ISAP), 1149 to 1172 (LKHL…KVSN), 1175 to 1197 (FPQL…ADDA), 1198 to 1222 (FPNL…FMDI), and 1235 to 1259 (ESVV…NFKL).

It belongs to the disease resistance NB-LRR family.

It is found in the cytoplasm. The protein resides in the membrane. Confers resistance to late blight (Phytophthora infestans) races carrying the avirulence gene Avr1. Resistance proteins guard the plant against pathogens that contain an appropriate avirulence protein via an indirect interaction with this avirulence protein. That triggers a defense system including the hypersensitive response, which restricts the pathogen growth. The protein is Late blight resistance protein R1-A (R1A) of Solanum demissum (Wild potato).